Reading from the N-terminus, the 481-residue chain is Zinc metalloproteinase/disintegrin (481 aa).

Positions 1–20 are cleaved as a signal peptide; the sequence is MIQVLLVTICLAVFPYQGSS. Positions 21–190 are excised as a propeptide; sequence IILESGNVDD…KASQLYLTPE (170 aa). Residues 197–392 form the Peptidase M12B domain; that stretch reads RYIKLAIVVD…DNPQCILNAP (196 aa). 3 disulfide bridges follow: Cys-308/Cys-387, Cys-349/Cys-371, and Cys-351/Cys-354. His-333 contributes to the Zn(2+) binding site. The active site involves Glu-334. His-337 and His-343 together coordinate Zn(2+). A propeptide spanning residues 393–408 is cleaved from the precursor; sequence LRTDTVSTPVSGNEFL. A Disintegrin domain is found at 400 to 481; it reads TPVSGNEFLE…ADCPRNGLYS (82 aa). 6 cysteine pairs are disulfide-bonded: Cys-414–Cys-429, Cys-416–Cys-424, Cys-423–Cys-446, Cys-437–Cys-443, Cys-442–Cys-467, and Cys-455–Cys-474. The Cell attachment site signature appears at 459–461; it reads RGD.

It belongs to the venom metalloproteinase (M12B) family. P-II subfamily. P-IIa sub-subfamily. As to quaternary structure, monomer. The cofactor is Zn(2+). As to expression, expressed by the venom gland.

It localises to the secreted. Its function is as follows. Impairs hemostasis in the envenomed animal. Inhibits platelet aggregation induced by ADP, thrombin, platelet-activating factor and collagen. Acts by inhibiting fibrinogen interaction with platelet receptors GPIIb/GPIIIa (ITGA2B/ITGB3). This chain is Zinc metalloproteinase/disintegrin, found in Protobothrops elegans (Elegant pitviper).